A 93-amino-acid polypeptide reads, in one-letter code: DNA-directed RNA polymerase subunit omega (93 aa).

The protein belongs to the RNA polymerase subunit omega family. As to quaternary structure, the RNAP catalytic core consists of 2 alpha, 1 beta, 1 beta' and 1 omega subunit. When a sigma factor is associated with the core the holoenzyme is formed, which can initiate transcription.

It catalyses the reaction RNA(n) + a ribonucleoside 5'-triphosphate = RNA(n+1) + diphosphate. Its function is as follows. Promotes RNA polymerase assembly. Latches the N- and C-terminal regions of the beta' subunit thereby facilitating its interaction with the beta and alpha subunits. This Actinobacillus pleuropneumoniae serotype 7 (strain AP76) protein is DNA-directed RNA polymerase subunit omega.